A 456-amino-acid polypeptide reads, in one-letter code: Nuclear distribution protein PAC1 (456 aa).

The LisH domain maps to 9–41; that stretch reads QADELHKSIIAYLSANDLPNTAAALRAELNLTE. Residues 61 to 88 are a coiled coil; sequence TSIVRLQKKIMDLEARNAALQSELDNLT. WD repeat units follow at residues 114–153, 156–197, 201–240, 243–282, 288–348, 350–389, 394–437, and 439–456; these read SHRD…LEMT, GHTR…KNVR, GHDH…CVRS, GHTG…NPEN, GHEH…LMTL, GHDN…KCVK, AHDR…PDVQ, and RCVI…IFAA.

This sequence belongs to the WD repeat LIS1/nudF family. Self-associates. Interacts with NDL1 and dynein.

The protein localises to the cytoplasm. Its subcellular location is the cytoskeleton. The protein resides in the spindle pole. Its function is as follows. Positively regulates the activity of the minus-end directed microtubule motor protein dynein. May enhance dynein-mediated microtubule sliding by targeting dynein to the microtubule plus end. Required for nuclear migration during vegetative growth as well as development. Required for retrograde early endosome (EE) transport from the hyphal tip. Required for localization of dynein to the mitotic spindle poles. Recruits additional proteins to the dynein complex at SPBs. The protein is Nuclear distribution protein PAC1 of Ajellomyces capsulatus (strain H143) (Darling's disease fungus).